Here is a 161-residue protein sequence, read N- to C-terminus: Small heat shock protein ibp (161 aa).

The region spanning 35-150 is the sHSP domain; that stretch reads EKPLSDTPAY…KPKKIFINIP (116 aa).

It belongs to the small heat shock protein (HSP20) family.

This is Small heat shock protein ibp (ibp) from Buchnera aphidicola subsp. Schizaphis graminum (strain Sg).